A 176-amino-acid polypeptide reads, in one-letter code: dCTP deaminase (176 aa).

Residues 99–104 (RSTLAR) and Asp115 contribute to the dCTP site. The active-site Proton donor/acceptor is the Glu125. A dCTP-binding site is contributed by Gln163.

It belongs to the dCTP deaminase family. As to quaternary structure, homotrimer.

The catalysed reaction is dCTP + H2O + H(+) = dUTP + NH4(+). It functions in the pathway pyrimidine metabolism; dUMP biosynthesis; dUMP from dCTP (dUTP route): step 1/2. Its function is as follows. Catalyzes the deamination of dCTP to dUTP. In Pyrobaculum neutrophilum (strain DSM 2338 / JCM 9278 / NBRC 100436 / V24Sta) (Thermoproteus neutrophilus), this protein is dCTP deaminase.